The sequence spans 308 residues: ADP,ATP carrier protein (308 aa).

Solcar repeat units lie at residues 6 to 99 (KNFM…FKRM), 110 to 203 (KWFA…LKPV), and 211 to 297 (NNFL…LQVI). Transmembrane regions (helical) follow at residues 8–35 (FMVD…VKLL), 76–100 (TANV…KRMF), 108–128 (YWKW…VSLS), 179–200 (FNIS…YDSL), and 214–234 (LAAF…SYPI). Positions 81 and 93 each coordinate ADP. Arg238 contributes to the ADP binding site. Residues 238 to 243 (RRRMMM) form an important for transport activity region. Residues 238-243 (RRRMMM) carry the Nucleotide carrier signature motif motif. Residues 274 to 294 (AGANILRAVAGAGVLAGYDQL) traverse the membrane as a helical segment.

The protein belongs to the mitochondrial carrier (TC 2.A.29) family. As to quaternary structure, monomer.

The protein localises to the mitochondrion inner membrane. It carries out the reaction ADP(in) + ATP(out) = ADP(out) + ATP(in). Its activity is regulated as follows. The matrix-open state (m-state) is inhibited by the membrane-permeable bongkrekic acid (BKA). The cytoplasmic-open state (c-state) is inhibited by the membrane-impermeable toxic inhibitor carboxyatractyloside (CATR). ADP:ATP antiporter that mediates import of ADP into the mitochondrial matrix for ATP synthesis, and export of ATP out to fuel the cell. Cycles between the cytoplasmic-open state (c-state) and the matrix-open state (m-state): operates by the alternating access mechanism with a single substrate-binding site intermittently exposed to either the cytosolic (c-state) or matrix (m-state) side of the inner mitochondrial membrane. The protein is ADP,ATP carrier protein (ABT) of Chlamydomonas reinhardtii (Chlamydomonas smithii).